The sequence spans 77 residues: U8-lycotoxin-Ls1p (77 aa).

The first 20 residues, 1-20 (MKLMIFTGLVLFAIVSLIEA), serve as a signal peptide directing secretion. Positions 21–26 (QAENEK) are excised as a propeptide.

The protein belongs to the neurotoxin 19 (CSTX) family. 08 (U8-Lctx) subfamily. Post-translationally, contains 4 disulfide bonds. As to expression, expressed by the venom gland.

It is found in the secreted. This Lycosa singoriensis (Wolf spider) protein is U8-lycotoxin-Ls1p.